The sequence spans 418 residues: D-amino acid dehydrogenase 1 (418 aa).

FAD is bound at residue 3–17; that stretch reads IMVLGGGVIGVTTAY.

Belongs to the DadA oxidoreductase family. The cofactor is FAD.

It carries out the reaction a D-alpha-amino acid + A + H2O = a 2-oxocarboxylate + AH2 + NH4(+). The protein operates within amino-acid degradation; D-alanine degradation; NH(3) and pyruvate from D-alanine: step 1/1. Functionally, oxidative deamination of D-amino acids. The protein is D-amino acid dehydrogenase 1 (dadA1) of Mesorhizobium japonicum (strain LMG 29417 / CECT 9101 / MAFF 303099) (Mesorhizobium loti (strain MAFF 303099)).